The following is a 378-amino-acid chain: TelA-like protein SAUSA300_1299 (378 aa).

Belongs to the TelA family.

The sequence is that of TelA-like protein SAUSA300_1299 from Staphylococcus aureus (strain USA300).